The following is a 379-amino-acid chain: Succinyl-diaminopimelate desuccinylase (379 aa).

H70 contributes to the Zn(2+) binding site. D72 is an active-site residue. D103 provides a ligand contact to Zn(2+). E137 acts as the Proton acceptor in catalysis. Zn(2+)-binding residues include E138, E166, and H352.

The protein belongs to the peptidase M20A family. DapE subfamily. As to quaternary structure, homodimer. It depends on Zn(2+) as a cofactor. Requires Co(2+) as cofactor.

It catalyses the reaction N-succinyl-(2S,6S)-2,6-diaminopimelate + H2O = (2S,6S)-2,6-diaminopimelate + succinate. It participates in amino-acid biosynthesis; L-lysine biosynthesis via DAP pathway; LL-2,6-diaminopimelate from (S)-tetrahydrodipicolinate (succinylase route): step 3/3. Functionally, catalyzes the hydrolysis of N-succinyl-L,L-diaminopimelic acid (SDAP), forming succinate and LL-2,6-diaminopimelate (DAP), an intermediate involved in the bacterial biosynthesis of lysine and meso-diaminopimelic acid, an essential component of bacterial cell walls. The polypeptide is Succinyl-diaminopimelate desuccinylase (Shewanella putrefaciens (strain CN-32 / ATCC BAA-453)).